The following is a 144-amino-acid chain: Large ribosomal subunit protein uL11 (144 aa).

It belongs to the universal ribosomal protein uL11 family. As to quaternary structure, part of the ribosomal stalk of the 50S ribosomal subunit. Interacts with L10 and the large rRNA to form the base of the stalk. L10 forms an elongated spine to which L12 dimers bind in a sequential fashion forming a multimeric L10(L12)X complex. Post-translationally, one or more lysine residues are methylated.

Functionally, forms part of the ribosomal stalk which helps the ribosome interact with GTP-bound translation factors. The sequence is that of Large ribosomal subunit protein uL11 from Nocardia farcinica (strain IFM 10152).